The chain runs to 118 residues: Large ribosomal subunit protein bL19 (118 aa).

The protein belongs to the bacterial ribosomal protein bL19 family.

Its function is as follows. This protein is located at the 30S-50S ribosomal subunit interface and may play a role in the structure and function of the aminoacyl-tRNA binding site. The chain is Large ribosomal subunit protein bL19 from Alcanivorax borkumensis (strain ATCC 700651 / DSM 11573 / NCIMB 13689 / SK2).